A 1790-amino-acid chain; its full sequence is Atrochrysone carboxylic acid synthase (1790 aa).

The interval 27–265 (RDLQDLFRQA…ALPVYGGLCH (239 aa)) is N-terminal acylcarrier protein transacylase domain (SAT). The 435-residue stretch at 399 to 833 (QSKLAIVGMS…GGNTTMILED (435 aa)) folds into the Ketosynthase family 3 (KS3) domain. Catalysis depends on for beta-ketoacyl synthase activity residues Cys-572, His-708, and His-751. The segment at 934 to 1254 (FSFTGQGASH…IAQLYTVGVD (321 aa)) is malonyl-CoA:ACP transacylase (MAT) domain. The N-terminal hotdog fold stretch occupies residues 1323–1475 (QQIVEQVFDT…SLTHLVRDRI (153 aa)). A PKS/mFAS DH domain is found at 1323 to 1634 (QQIVEQVFDT…FHRYRRILLE (312 aa)). His-1357 serves as the catalytic Proton acceptor; for dehydratase activity. A product template (PT) domain region spans residues 1357–1631 (HRMNDCGVAT…GIEFHRYRRI (275 aa)). The C-terminal hotdog fold stretch occupies residues 1487 to 1634 (ANRLSHNMAY…FHRYRRILLE (148 aa)). The active-site Proton donor; for dehydratase activity is the Asp-1545. The interval 1644–1667 (NLDDTTETKDISSSTQHSVPVSRQ) is disordered. The segment covering 1654-1664 (ISSSTQHSVPV) has biased composition (polar residues). Positions 1715–1789 (SSITNRAMQL…DLRNWLEETY (75 aa)) constitute a Carrier domain. The residue at position 1749 (Ser-1749) is an O-(pantetheine 4'-phosphoryl)serine.

It catalyses the reaction holo-[ACP] + 8 malonyl-CoA + 8 H(+) = atrochrysone carboxyl-[ACP] + 8 CO2 + 8 CoA + 2 H2O. Its pathway is pigment biosynthesis. Its function is as follows. Non-reducing polyketide synthase; part of the gene cluster that mediates the biosynthesis of the bianthraquinone cladofulvin, a conidial pigment not required for virulence but that plays a role in fitness and resistance to environmental stresses including UV light and low-temperature stress. The pathway begins with the synthesis of atrochrysone thioester by the polyketide synthase (PKS) claG. The atrochrysone carboxyl ACP thioesterase claF then breaks the thioester bond and releases the atrochrysone carboxylic acid from claG. This compound is decarboxylated by claH to yield emodin, which is further converted to chrysophanol hydroquinone by the reductase claC and the dehydratase claB. The cytochrome P450 monooxygenase claM then catalyzes the dimerization of nataloe-emodin to cladofulvin. This chain is Atrochrysone carboxylic acid synthase, found in Passalora fulva (Tomato leaf mold).